The following is a 138-amino-acid chain: Large ribosomal subunit protein uL16 (138 aa).

This sequence belongs to the universal ribosomal protein uL16 family. As to quaternary structure, part of the 50S ribosomal subunit.

In terms of biological role, binds 23S rRNA and is also seen to make contacts with the A and possibly P site tRNAs. The sequence is that of Large ribosomal subunit protein uL16 from Syntrophobacter fumaroxidans (strain DSM 10017 / MPOB).